A 423-amino-acid polypeptide reads, in one-letter code: UDP-N-acetylglucosamine 1-carboxyvinyltransferase 1 (423 aa).

24 to 25 (KN) lines the phosphoenolpyruvate pocket. Residue R94 coordinates UDP-N-acetyl-alpha-D-glucosamine. C118 (proton donor) is an active-site residue. The residue at position 118 (C118) is a 2-(S-cysteinyl)pyruvic acid O-phosphothioketal. UDP-N-acetyl-alpha-D-glucosamine is bound by residues 123–127 (RPIDQ), D309, and I331.

Belongs to the EPSP synthase family. MurA subfamily.

The protein localises to the cytoplasm. The enzyme catalyses phosphoenolpyruvate + UDP-N-acetyl-alpha-D-glucosamine = UDP-N-acetyl-3-O-(1-carboxyvinyl)-alpha-D-glucosamine + phosphate. It participates in cell wall biogenesis; peptidoglycan biosynthesis. Cell wall formation. Adds enolpyruvyl to UDP-N-acetylglucosamine. This is UDP-N-acetylglucosamine 1-carboxyvinyltransferase 1 from Staphylococcus haemolyticus (strain JCSC1435).